The following is a 923-amino-acid chain: Alanine--tRNA ligase (923 aa).

Histidine 611, histidine 615, cysteine 714, and histidine 718 together coordinate Zn(2+).

The protein belongs to the class-II aminoacyl-tRNA synthetase family. Requires Zn(2+) as cofactor.

The protein resides in the cytoplasm. It carries out the reaction tRNA(Ala) + L-alanine + ATP = L-alanyl-tRNA(Ala) + AMP + diphosphate. Catalyzes the attachment of alanine to tRNA(Ala) in a two-step reaction: alanine is first activated by ATP to form Ala-AMP and then transferred to the acceptor end of tRNA(Ala). Also edits incorrectly charged Ser-tRNA(Ala) and Gly-tRNA(Ala) via its editing domain. In Methanosarcina barkeri (strain Fusaro / DSM 804), this protein is Alanine--tRNA ligase.